A 245-amino-acid chain; its full sequence is Ribonuclease 3 (245 aa).

The RNase III domain occupies 19–148; that stretch reads FRAFQQKLGI…FIGALYLDQG (130 aa). Mg(2+) is bound at residue Glu61. Asp65 is a catalytic residue. Positions 134 and 137 each coordinate Mg(2+). Glu137 is an active-site residue. A DRBM domain is found at 174–243; the sequence is DYKSQLQELI…AAEALRKLKE (70 aa).

Belongs to the ribonuclease III family. Homodimer. Mg(2+) is required as a cofactor.

It localises to the cytoplasm. The catalysed reaction is Endonucleolytic cleavage to 5'-phosphomonoester.. Digests double-stranded RNA. Involved in the processing of primary rRNA transcript to yield the immediate precursors to the large and small rRNAs (23S and 16S). Processes some mRNAs, and tRNAs when they are encoded in the rRNA operon. Processes pre-crRNA and tracrRNA of type II CRISPR loci if present in the organism. This is Ribonuclease 3 from Bacillus cytotoxicus (strain DSM 22905 / CIP 110041 / 391-98 / NVH 391-98).